We begin with the raw amino-acid sequence, 3912 residues long: Ubiquitin carboxyl-terminal hydrolase puf (3912 aa).

Disordered regions lie at residues 101–172, 518–590, 660–688, 851–878, and 1491–1611; these read AQQQ…HKSH, NVTA…ISPE, DVPSSDEADGEADGDGEGELLADSDECSD, VVSGGKQHHSPKASQGSSTSGSTPVQPS, and SRRG…PALS. Basic and acidic residues predominate over residues 106-133; sequence EQQRDEASAQAEAKESSAPAEEPKKEEP. The span at 134-143 shows a compositional bias: low complexity; that stretch reads SGSAGEEAQG. Pro residues predominate over residues 150 to 164; sequence KKPPVGPCTPPPPQT. The span at 522–532 shows a compositional bias: low complexity; that stretch reads SSSDSGSIEGS. Residues 576 to 585 are compositionally biased toward basic and acidic residues; sequence ICDPTTEKGK. Over residues 660-687 the composition is skewed to acidic residues; it reads DVPSSDEADGEADGDGEGELLADSDECS. Positions 862–876 are enriched in polar residues; sequence KASQGSSTSGSTPVQ. The span at 1511 to 1520 shows a compositional bias: basic residues; sequence VKKSSMGRRR. Residues 1550–1567 show a composition bias toward polar residues; sequence TPSTGLQDVETEASSSSG. Residues 1583 to 1594 show a composition bias toward basic and acidic residues; the sequence is KGETFEQEKERP. Pro residues predominate over residues 1600–1609; the sequence is PPSPTPPPPA. A USP domain is found at 2015 to 2380; that stretch reads VGLTNLGATC…SAYMLFYERR (366 aa). Cys2024 (nucleophile) is an active-site residue. Over residues 2249-2263 the composition is skewed to basic and acidic residues; it reads YKEERERRQKEKEGA. The interval 2249-2274 is disordered; that stretch reads YKEERERRQKEKEGADGSGDGNDNEK. His2305 (proton acceptor) is an active-site residue. Disordered regions lie at residues 2391–2529, 3322–3344, 3657–3776, and 3800–3912; these read ELLV…TSKA, QQSQSQTQTPQSPQQKEKQLQQQ, SERF…EERE, and ASVP…PTQI. Composition is skewed to basic and acidic residues over residues 2402 to 2413 and 2433 to 2488; these read VEEKSEAEEPTK and EKDK…EKPT. A compositionally biased stretch (low complexity) spans 2504–2523; that stretch reads NCDNHQQNNNSNSKASNDQQ. The span at 3657–3703 shows a compositional bias: basic and acidic residues; sequence SERFRKESERDPFPNKKQKRDSQKIKEKEHPQPESEKETSTENDKPS. Positions 3706–3721 are enriched in polar residues; sequence SMESSGNAEQATDSTK. Residues 3741 to 3751 show a composition bias toward acidic residues; the sequence is SDDETELEDEL. A compositionally biased stretch (basic and acidic residues) spans 3766-3776; it reads TAQDRVNEERE. Residues 3865-3877 are compositionally biased toward polar residues; sequence PKTSQTNGSQQNE. Positions 3878-3912 are enriched in low complexity; sequence SPPAATSADTAPANPSPAPAAAVASTSQAASPTQI.

This sequence belongs to the peptidase C19 family. Interacts with Myc and ago.

The protein resides in the nucleus. It catalyses the reaction Thiol-dependent hydrolysis of ester, thioester, amide, peptide and isopeptide bonds formed by the C-terminal Gly of ubiquitin (a 76-residue protein attached to proteins as an intracellular targeting signal).. Functionally, ubiquitin hydrolase that can remove conjugated ubiquitin from target proteins and polyubiquitin chains. Essential for Myc-mediated cell growth and proliferation in developing eyes and wings. In the wing and eye, the deubiquitinating activity acts as an antagonist to the SCF E3 ubiquitin-protein ligase member archipelago (ago) to regulate Myc and CycE stability and thus control cell growth and proliferation. Also appears to regulate ago by modulating its induction by Myc. May also promote cell apoptosis in the wing imaginal disk, acting in an apoptotic pathway that appears to be largely independent of Myc. Required for preventing the activation of the immune deficiency (Imd) and Toll signaling cascades under unchallenged conditions. Also appears to be involved in modulating the differential expression of certain antimicrobial peptides (AMP) in response to infection by either Gram-positive or Gram-negative bacteria. Involved in the regulation of DNA damage repair pathways, including euchromatic site-specific double strand break (DSB) repair. This Drosophila melanogaster (Fruit fly) protein is Ubiquitin carboxyl-terminal hydrolase puf.